The primary structure comprises 126 residues: Bactofilin BacO (126 aa).

It belongs to the bactofilin family. As to quaternary structure, interacts with BacN and probably also BacP, the 3 proteins colocalize as an extended structure. Interacts with PadC.

The protein resides in the cytoplasm. The protein localises to the cytoskeleton. Functionally, a non-essential component of the chromosome segregation machinery. Positions the ParA-ParB-parS chromosome segregation machinery within the cell; BacP seems to be the most important bactofilin in this process. Forms a heteropolymeric, subpolar scaffold in the cell; BacP probably forms the core, BacO contributes to position and integrity while BacN does not seem to contribute to assembly. The protein is Bactofilin BacO of Myxococcus xanthus (strain DK1622).